The chain runs to 148 residues: 3-hydroxyacyl-[acyl-carrier-protein] dehydratase FabZ (148 aa).

The active site involves His48.

Belongs to the thioester dehydratase family. FabZ subfamily.

The protein localises to the cytoplasm. The catalysed reaction is a (3R)-hydroxyacyl-[ACP] = a (2E)-enoyl-[ACP] + H2O. In terms of biological role, involved in unsaturated fatty acids biosynthesis. Catalyzes the dehydration of short chain beta-hydroxyacyl-ACPs and long chain saturated and unsaturated beta-hydroxyacyl-ACPs. In Campylobacter fetus subsp. fetus (strain 82-40), this protein is 3-hydroxyacyl-[acyl-carrier-protein] dehydratase FabZ.